Here is a 383-residue protein sequence, read N- to C-terminus: 8-amino-7-oxononanoate synthase (383 aa).

Arg22 serves as a coordination point for substrate. Gly109–Phe110 contributes to the pyridoxal 5'-phosphate binding site. Position 134 (His134) interacts with substrate. Pyridoxal 5'-phosphate is bound by residues Ser178, His206, and Thr232. At Lys235 the chain carries N6-(pyridoxal phosphate)lysine. Thr348 contacts substrate.

Belongs to the class-II pyridoxal-phosphate-dependent aminotransferase family. BioF subfamily. In terms of assembly, homodimer. Pyridoxal 5'-phosphate is required as a cofactor.

It carries out the reaction 6-carboxyhexanoyl-[ACP] + L-alanine + H(+) = (8S)-8-amino-7-oxononanoate + holo-[ACP] + CO2. It participates in cofactor biosynthesis; biotin biosynthesis. Its function is as follows. Catalyzes the decarboxylative condensation of pimeloyl-[acyl-carrier protein] and L-alanine to produce 8-amino-7-oxononanoate (AON), [acyl-carrier protein], and carbon dioxide. In Vibrio parahaemolyticus serotype O3:K6 (strain RIMD 2210633), this protein is 8-amino-7-oxononanoate synthase.